The sequence spans 294 residues: Indole-3-glycerol phosphate synthase (294 aa).

Belongs to the TrpC family.

It carries out the reaction 1-(2-carboxyphenylamino)-1-deoxy-D-ribulose 5-phosphate + H(+) = (1S,2R)-1-C-(indol-3-yl)glycerol 3-phosphate + CO2 + H2O. It functions in the pathway amino-acid biosynthesis; L-tryptophan biosynthesis; L-tryptophan from chorismate: step 4/5. This is Indole-3-glycerol phosphate synthase from Synechococcus sp. (strain RCC307).